A 230-amino-acid polypeptide reads, in one-letter code: Probable phosphatase IndB (230 aa).

The active-site Nucleophile is the Asp-8. Asp-8, Asp-10, and Asp-169 together coordinate Mg(2+). The active-site Proton donor is the Asp-10.

Belongs to the HAD-like hydrolase superfamily. It depends on Mg(2+) as a cofactor.

In terms of biological role, part of an operon that could be involved in the biosynthesis of the blue pigment indigoidine, which is implicated in pathogenicity and protection from oxidative stress. The chain is Probable phosphatase IndB from Dickeya dadantii (strain 3937) (Erwinia chrysanthemi (strain 3937)).